Consider the following 369-residue polypeptide: Transcription factor GTE6 (369 aa).

A Bromo domain is found at 89–198 (KRMQDLMRQF…EKFEEKWAHF (110 aa)). The stretch at 201–263 (KVQEEEKIRE…VERCRKITIE (63 aa)) forms a coiled coil. The 82-residue stretch at 250–331 (MRKVVERCRK…DALDNAMKKK (82 aa)) folds into the NET domain. Residues 329–348 (KKKKEEETKTRELSGAQKKE) show a composition bias toward basic and acidic residues. The tract at residues 329 to 369 (KKKKEEETKTRELSGAQKKEVSKKRNATTKLAERKTKRSRI) is disordered. Positions 351–368 (KKRNATTKLAERKTKRSR) match the Bipartite nuclear localization signal motif.

In terms of tissue distribution, abundantly expressed in flowers. Weakly expressed in roots, leaves and siliques; and undetectable in 5-day-old seedlings. In the basal rosette leaves of 21-day-old plants, it is more abundant in leaves 6 and 7, which possess narrow elliptical laminae, than in leaves 1-4, which have round laminae, suggesting a possible correlation between its expression and the formation of elliptical leaf laminae in mature leaves.

It is found in the nucleus. Regulates differences in leaf patterning between juvenile and mature leaves by controlling differences in the development of primordia produced during juvenile and mature phases. Acts by activating transcription of the myb-domain protein AS1, a gene involved in leaf-axis specification. Associates with the promoter and the start of the transcribed region of AS1 and up-regulates expression of AS1 through acetylation of histones H3 and H4. The polypeptide is Transcription factor GTE6 (GTE6) (Arabidopsis thaliana (Mouse-ear cress)).